The sequence spans 130 residues: Large ribosomal subunit protein bL21 (130 aa).

The disordered stretch occupies residues 110–130 (TAPTATEETADATPDTETAAE).

It belongs to the bacterial ribosomal protein bL21 family. As to quaternary structure, part of the 50S ribosomal subunit. Contacts protein L20.

This protein binds to 23S rRNA in the presence of protein L20. The chain is Large ribosomal subunit protein bL21 from Nostoc sp. (strain PCC 7120 / SAG 25.82 / UTEX 2576).